Here is a 178-residue protein sequence, read N- to C-terminus: Acireductone dioxygenase 1 (178 aa).

Positions 84, 86, 90, and 130 each coordinate Fe(2+). Residues histidine 84, histidine 86, glutamate 90, and histidine 130 each coordinate Ni(2+).

This sequence belongs to the acireductone dioxygenase (ARD) family. Fe(2+) serves as cofactor. Ni(2+) is required as a cofactor.

It is found in the cytoplasm. It localises to the nucleus. It catalyses the reaction 1,2-dihydroxy-5-(methylsulfanyl)pent-1-en-3-one + O2 = 4-methylsulfanyl-2-oxobutanoate + formate + 2 H(+). The enzyme catalyses 1,2-dihydroxy-5-(methylsulfanyl)pent-1-en-3-one + O2 = 3-(methylsulfanyl)propanoate + CO + formate + 2 H(+). It functions in the pathway amino-acid biosynthesis; L-methionine biosynthesis via salvage pathway; L-methionine from S-methyl-5-thio-alpha-D-ribose 1-phosphate: step 5/6. In terms of biological role, catalyzes 2 different reactions between oxygen and the acireductone 1,2-dihydroxy-3-keto-5-methylthiopentene (DHK-MTPene) depending upon the metal bound in the active site. Fe-containing acireductone dioxygenase (Fe-ARD) produces formate and 2-keto-4-methylthiobutyrate (KMTB), the alpha-ketoacid precursor of methionine in the methionine recycle pathway. Ni-containing acireductone dioxygenase (Ni-ARD) produces methylthiopropionate, carbon monoxide and formate, and does not lie on the methionine recycle pathway. The chain is Acireductone dioxygenase 1 from Coprinopsis cinerea (strain Okayama-7 / 130 / ATCC MYA-4618 / FGSC 9003) (Inky cap fungus).